The sequence spans 203 residues: Probable proteasome subunit beta type-1 (203 aa).

Residues 1–10 (MMSNEKEMTG) constitute a propeptide, removed in mature form. Threonine 11 functions as the Nucleophile in the catalytic mechanism.

The protein belongs to the peptidase T1B family. The 26S proteasome consists of a 20S proteasome core and two 19S regulatory subunits. The 20S proteasome core is composed of 28 subunits that are arranged in four stacked rings, resulting in a barrel-shaped structure. The two end rings are each formed by seven alpha subunits, and the two central rings are each formed by seven beta subunits. The catalytic chamber with the active sites is on the inside of the barrel.

It is found in the cytoplasm. It localises to the nucleus. It carries out the reaction Cleavage of peptide bonds with very broad specificity.. The proteasome degrades poly-ubiquitinated proteins in the cytoplasm and in the nucleus. It is essential for the regulated turnover of proteins and for the removal of misfolded proteins. The proteasome is a multicatalytic proteinase complex that is characterized by its ability to cleave peptides with Arg, Phe, Tyr, Leu, and Glu adjacent to the leaving group at neutral or slightly basic pH. It has an ATP-dependent proteolytic activity. This chain is Probable proteasome subunit beta type-1 (PRE3), found in Encephalitozoon cuniculi (strain GB-M1) (Microsporidian parasite).